We begin with the raw amino-acid sequence, 136 residues long: Large ribosomal subunit protein uL22 (136 aa).

This sequence belongs to the universal ribosomal protein uL22 family. In terms of assembly, part of the 50S ribosomal subunit.

This protein binds specifically to 23S rRNA; its binding is stimulated by other ribosomal proteins, e.g. L4, L17, and L20. It is important during the early stages of 50S assembly. It makes multiple contacts with different domains of the 23S rRNA in the assembled 50S subunit and ribosome. Functionally, the globular domain of the protein is located near the polypeptide exit tunnel on the outside of the subunit, while an extended beta-hairpin is found that lines the wall of the exit tunnel in the center of the 70S ribosome. The chain is Large ribosomal subunit protein uL22 from Parabacteroides distasonis (strain ATCC 8503 / DSM 20701 / CIP 104284 / JCM 5825 / NCTC 11152).